The following is a 456-amino-acid chain: Divalent metal cation transporter MntH (456 aa).

Helical transmembrane passes span 47-67 (ALSFFGPGYLVAVGYMDPGNW), 77-97 (FGYALLSVVLLSNLMAVLLQA), 123-143 (AWPLWLLAELAICATDLAEVI), 151-171 (LLFGIPLEIGVILTAVDVLLV), 184-204 (ALIITLLGVIALCFLTQIIMA), 227-247 (MLYIALGIIGATVMPHNLYLH), 276-296 (IALTFALVINASILILAAASF), 316-336 (PLLGSAIAPALFAIALLCCGL), 369-389 (FVAIVPAAIVTILYGSQGTTE), 392-412 (ILSQVVLSLQLPFAVIPLVIF), and 422-442 (LAAAPWVTFLAAITAAIIVVL).

This sequence belongs to the NRAMP family.

The protein localises to the cell inner membrane. H(+)-stimulated, divalent metal cation uptake system. This is Divalent metal cation transporter MntH from Brucella suis biovar 1 (strain 1330).